The chain runs to 227 residues: Atypical response regulator protein ChxR (227 aa).

In terms of domain architecture, Response regulatory spans 6–108 (HVLLVSEHWD…ILKSAISLFL (103 aa)). A DNA-binding region (ompR/PhoB-type) is located at residues 117 to 213 (PESIRFGPNV…LRGVGYLFSD (97 aa)).

As to quaternary structure, homodimer.

Functionally, may be a global positive regulator of transcription. Binds a cis-acting element of its own promoter DNA sequence and is hence probably also involved in its own transcription activation. The recognition sequence is 5'-WHGAWNH-N(3-5)-WHGAWNH-3', where W is A/T, H is C/A/T, N is G/C/A/T and the linker length in the middle is 3 to 5 nucleotides. This is Atypical response regulator protein ChxR from Chlamydia trachomatis serovar L2 (strain ATCC VR-902B / DSM 19102 / 434/Bu).